We begin with the raw amino-acid sequence, 141 residues long: uncharacterized protein (141 aa).

In terms of domain architecture, MaoC-like spans 8–112 (IGQVFKTKSL…VLDKQPKRNE (105 aa)).

This is an uncharacterized protein from Bacillus subtilis (strain 168).